Here is a 221-residue protein sequence, read N- to C-terminus: Ras-related protein Rab-27A (221 aa).

At Ser2 the chain carries N-acetylserine. Ser2 bears the Phosphoserine mark. Position 16 to 24 (16 to 24 (GDSGVGKTS)) interacts with GTP. Positions 38–46 (FITTVGIDF) match the Effector region motif. Residues 74-78 (DTAGQ), 133-136 (NKSD), and 163-165 (SAA) contribute to the GTP site. A disulfide bond links Cys123 and Cys188. Positions 202-221 (NGHTSADPLNEEKEKGSCGC) are disordered. Positions 211 to 221 (NEEKEKGSCGC) are enriched in basic and acidic residues. 2 S-geranylgeranyl cysteine lipidation sites follow: Cys219 and Cys221. Residue Cys221 is modified to Cysteine methyl ester.

It belongs to the small GTPase superfamily. Rab family. In terms of assembly, binds SYTL1, SLAC2B, MYRIP, SYTL3, SYTL4 and SYTL5. Interacts with RPH3A and RPH3A. Binds MLPH and SYTL2. Interacts with UNC13D. Does not interact with the BLOC-3 complex (heterodimer of HPS1 and HPS4). Interacts (GDP-bound form preferentially) with DENND10.

The protein localises to the membrane. It is found in the melanosome. The protein resides in the late endosome. Its subcellular location is the lysosome. It catalyses the reaction GTP + H2O = GDP + phosphate + H(+). Its activity is regulated as follows. Regulated by guanine nucleotide exchange factors (GEFs) which promote the exchange of bound GDP for free GTP, GTPase activating proteins (GAPs) which increase the GTP hydrolysis activity, and GDP dissociation inhibitors which inhibit the dissociation of the nucleotide from the GTPase. Activated by GEFs such as DENND10. Its function is as follows. Small GTPase which cycles between active GTP-bound and inactive GDP-bound states. In its active state, binds to a variety of effector proteins to regulate homeostasis of late endocytic pathway, including endosomal positioning, maturation and secretion. Plays a role in cytotoxic granule exocytosis in lymphocytes. Required for both granule maturation and granule docking and priming at the immunologic synapse. This Sus scrofa (Pig) protein is Ras-related protein Rab-27A (RAB27A).